The following is a 308-amino-acid chain: Phosphate transport system permease protein PstA 1 (308 aa).

6 helical membrane passes run 36–56, 96–116, 132–152, 155–175, 204–224, and 276–296; these read FFFTSFVVALIPLVWLLWVVI, AGVAAVLAVPLGLMTAVYLVE, VLAGVPSIVAALFVFSLWIAT, FQQSAFAVALALVLLMLPVVV, IVRIVAPIAMPGIVSGILLSI, and WGAALTLIIVVATINLAAAMI. The 209-residue stretch at 89–297 folds into the ABC transmembrane type-1 domain; sequence LYGTLVQAGV…TINLAAAMIR (209 aa).

The protein belongs to the binding-protein-dependent transport system permease family. CysTW subfamily. The complex is composed of two ATP-binding proteins (PstB), two transmembrane proteins (PstC and PstA) and a solute-binding protein (PstS).

Its subcellular location is the cell membrane. In terms of biological role, part of the binding-protein-dependent transport system for phosphate; probably responsible for the translocation of the substrate across the membrane. In Mycobacterium tuberculosis (strain ATCC 25618 / H37Rv), this protein is Phosphate transport system permease protein PstA 1 (pstA1).